Reading from the N-terminus, the 435-residue chain is RuBisCO large subunit-binding protein subunit beta-1 (435 aa).

This sequence belongs to the chaperonin (HSP60) family. Oligomer of probably six alpha and six beta subunits.

It localises to the plastid. The protein localises to the chloroplast. Functionally, this protein binds RuBisCO small and large subunits and is implicated in the assembly of the enzyme oligomer. In Chlamydomonas reinhardtii (Chlamydomonas smithii), this protein is RuBisCO large subunit-binding protein subunit beta-1.